The chain runs to 310 residues: Probable cobalamin biosynthesis protein CobD (310 aa).

A run of 5 helical transmembrane segments spans residues 53-73 (LVFG…IFFT), 80-100 (LISN…FSIG), 157-177 (DSII…AFIY), 215-235 (IAGI…VPAI), and 289-309 (AVDY…FNLI).

This sequence belongs to the CobD/CbiB family.

It is found in the cell membrane. It functions in the pathway cofactor biosynthesis; adenosylcobalamin biosynthesis. Converts cobyric acid to cobinamide by the addition of aminopropanol on the F carboxylic group. The protein is Probable cobalamin biosynthesis protein CobD of Methanococcus vannielii (strain ATCC 35089 / DSM 1224 / JCM 13029 / OCM 148 / SB).